A 238-amino-acid chain; its full sequence is Acyl-protein thioesterase 1 (238 aa).

Catalysis depends on charge relay system residues Ser-120, Asp-174, and His-219.

The protein belongs to the AB hydrolase superfamily. AB hydrolase 2 family.

Its subcellular location is the cytoplasm. The protein localises to the nucleus. It carries out the reaction S-hexadecanoyl-L-cysteinyl-[protein] + H2O = L-cysteinyl-[protein] + hexadecanoate + H(+). Functionally, hydrolyzes fatty acids from S-acylated cysteine residues in proteins with a strong preference for palmitoylated G-alpha proteins over other acyl substrates. Mediates the deacylation of G-alpha proteins such as GPA1 in vivo, but has weak or no activity toward palmitoylated Ras proteins. Has weak lysophospholipase activity in vitro; however such activity may not exist in vivo. This Cryptococcus neoformans var. neoformans serotype D (strain B-3501A) (Filobasidiella neoformans) protein is Acyl-protein thioesterase 1.